The chain runs to 280 residues: Ribosomal protein L11 methyltransferase (280 aa).

The S-adenosyl-L-methionine site is built by Thr-131, Gly-152, Asp-174, and Asn-217.

It belongs to the methyltransferase superfamily. PrmA family.

Its subcellular location is the cytoplasm. The catalysed reaction is L-lysyl-[protein] + 3 S-adenosyl-L-methionine = N(6),N(6),N(6)-trimethyl-L-lysyl-[protein] + 3 S-adenosyl-L-homocysteine + 3 H(+). Methylates ribosomal protein L11. The protein is Ribosomal protein L11 methyltransferase of Bacteroides fragilis (strain ATCC 25285 / DSM 2151 / CCUG 4856 / JCM 11019 / LMG 10263 / NCTC 9343 / Onslow / VPI 2553 / EN-2).